Consider the following 473-residue polypeptide: MTPVIALVGRPNVGKSTLFNQMTRSRDALVADFPGLTRDRKYGEGNYEGQKFIVIDTGGLTGDEAGIDAEMARQSMQAVEEADIVLFLVDGRAGLTAGDEMIADYLRKSGKQAHLVVNKTDGQDPDVAAADFYSLGFESTFLIAAAHNRGILSLLEALLPEPENPEDQDRADRYPGIRIGVVGRPNVGKSTLVNRMLGEDRVVVYDMPGTTRDSVYIPYERQGHEYTLIDTAGVRRRKNVREAVEKFSIIKTLQAIDDAHVVILVIDAREGLVDQDLHLIGFVLDAGRSLVIAINKWDGMDPEDRDRVKEQVARRLDFLDYADKYYISALHGTGVGTMYESVQACYESAMSKWPTNRLTAILQDAVAQHQPPMVHGRRIKLRYAHQGGSNPPVVVVHGNQVDSLPGAYKRYLENTFRKVLKVVGAPIRFEFKSGENPFATKVDRLTPRQKVKKDNDLKKGRRIKKTRQKSVKR.

EngA-type G domains lie at 3 to 166 and 177 to 350; these read PVIA…ENPE and IRIG…ESAM. GTP is bound by residues 9–16, 56–60, 118–121, 183–190, 230–234, and 295–298; these read GRPNVGKS, DTGGL, NKTD, DTAGV, and NKWD. A KH-like domain is found at 351–435; that stretch reads SKWPTNRLTA…PIRFEFKSGE (85 aa). Basic and acidic residues predominate over residues 444-458; that stretch reads RLTPRQKVKKDNDLK. A disordered region spans residues 444–473; that stretch reads RLTPRQKVKKDNDLKKGRRIKKTRQKSVKR. The span at 459–473 shows a compositional bias: basic residues; it reads KGRRIKKTRQKSVKR.

This sequence belongs to the TRAFAC class TrmE-Era-EngA-EngB-Septin-like GTPase superfamily. EngA (Der) GTPase family. As to quaternary structure, associates with the 50S ribosomal subunit.

In terms of biological role, GTPase that plays an essential role in the late steps of ribosome biogenesis. In Marinobacter nauticus (strain ATCC 700491 / DSM 11845 / VT8) (Marinobacter aquaeolei), this protein is GTPase Der.